A 916-amino-acid chain; its full sequence is Translation initiation factor IF-2 (916 aa).

Residues 58–317 are disordered; the sequence is LEAEGHLPGA…GVTVPRGDGG (260 aa). The segment covering 120–142 has biased composition (low complexity); it reads EKVAASEAADAKPAAGAPADTAK. Over residues 195 to 206 the composition is skewed to pro residues; it reads SNIPRPAPPRPG. Composition is skewed to gly residues over residues 214 to 227 and 235 to 282; these read RPGG…GGRP and SAGG…GRGG. Over residues 283 to 294 the composition is skewed to basic residues; the sequence is GKSKARKSKRAK. Residues 409–583 enclose the tr-type G domain; it reads IRPPVVTVMG…LTADAGLDLR (175 aa). The G1 stretch occupies residues 418 to 425; that stretch reads GHVDHGKT. 418–425 lines the GTP pocket; that stretch reads GHVDHGKT. Positions 443-447 are G2; that stretch reads GITQH. Residues 468 to 471 are G3; the sequence is DTPG. Residues 468 to 472 and 522 to 525 each bind GTP; these read DTPGH and NKVD. Residues 522-525 form a G4 region; sequence NKVD. The tract at residues 558–560 is G5; the sequence is SAR.

It belongs to the TRAFAC class translation factor GTPase superfamily. Classic translation factor GTPase family. IF-2 subfamily.

The protein resides in the cytoplasm. In terms of biological role, one of the essential components for the initiation of protein synthesis. Protects formylmethionyl-tRNA from spontaneous hydrolysis and promotes its binding to the 30S ribosomal subunits. Also involved in the hydrolysis of GTP during the formation of the 70S ribosomal complex. The polypeptide is Translation initiation factor IF-2 (Leifsonia xyli subsp. xyli (strain CTCB07)).